We begin with the raw amino-acid sequence, 4367 residues long: Guanylate cyclase (4367 aa).

Residues 1–10 (MKKTRTTAAE) show a composition bias toward polar residues. A disordered region spans residues 1 to 70 (MKKTRTTAAE…MSFLQGKHQQ (70 aa)). At 1–150 (MKKTRTTAAE…FKNLWEQFHR (150 aa)) the chain is on the cytoplasmic side. A compositionally biased stretch (basic and acidic residues) spans 19–33 (PHDEHRGRGREHGGA). Residues 54–63 (HQATQKQMSF) show a composition bias toward polar residues. The helical transmembrane segment at 151-171 (VINWWFLVMAIIQAIPQLHYN) threads the bilayer. Topologically, residues 172–174 (PNH) are extracellular. The chain crosses the membrane as a helical span at residues 175 to 195 (AWSTALPFAIVLVFGMLKDAF). Residues 196-373 (TDLGRRERDR…GFKRPHIEKD (178 aa)) lie on the Cytoplasmic side of the membrane. Residues 374–394 (INTYLFISFFIVFLTILISVM) traverse the membrane as a helical segment. Residues 395 to 452 (SKWSVQERDSGDTGVTDAGASSGSGSSSGETSQTYGSSVEFMLGSRDLLQNPWMSILR) lie on the Extracellular side of the membrane. The tract at residues 402–426 (RDSGDTGVTDAGASSGSGSSSGETS) is disordered. Residues 407–426 (TGVTDAGASSGSGSSSGETS) are compositionally biased toward low complexity. Residues 453–473 (FLAVYAPVLPLSLPLILDVVY) traverse the membrane as a helical segment. At 474-2258 (LLQSVLIEGD…VHGRLSLMRV (1785 aa)) the chain is on the cytoplasmic side. Disordered regions lie at residues 486-535 (IRGG…QQPL), 550-699 (SEKF…ISGR), 831-918 (ETSA…ASSL), 932-966 (RLEETGSQKEEDSRSDRVSLSPSEGRVSGSRPQLA), 980-1047 (VGIQ…GELS), 1079-1164 (GMSF…MPAV), 1344-1593 (PSGT…SLKS), 1607-1652 (FRRG…TGTG), 1773-1861 (GGRG…GLRS), and 1881-1946 (DKQH…PQHL). Polar residues predominate over residues 523-535 (AHSSQNASLQQPL). 2 stretches are compositionally biased toward basic and acidic residues: residues 605–628 (ETLRADAEGAQERDREAEGNREQL) and 670–679 (RRSDDRDRKS). The segment covering 850–863 (SAASSRSQSAPASA) has biased composition (low complexity). Residues 880–892 (QTLTNQQTGQQSP) show a composition bias toward polar residues. The segment covering 906–917 (ASPGAADSPASS) has biased composition (low complexity). The segment covering 932 to 948 (RLEETGSQKEEDSRSDR) has biased composition (basic and acidic residues). The segment covering 983 to 996 (QSQHSSQSLLSSRQ) has biased composition (low complexity). A compositionally biased stretch (basic and acidic residues) spans 1025–1047 (DRMYSRDYHRESRSSSPRDGELS). Polar residues-rich tracts occupy residues 1084–1094 (SRPSSQFTFSS) and 1117–1130 (RSLTPPSERGTASP). A compositionally biased stretch (low complexity) spans 1344–1357 (PSGTSASSGAPSGP). Composition is skewed to gly residues over residues 1370 to 1381 (QGQGHGSLGAPG) and 1389 to 1400 (CLGGAGGSGARG). A compositionally biased stretch (pro residues) spans 1443 to 1454 (VPSPRPLSPAGP). A compositionally biased stretch (basic and acidic residues) spans 1527-1542 (SFKEKHEEFAFSKDED). Positions 1543–1567 (TATVDQDDTQSATDEEHDVEGEEEE) are enriched in acidic residues. Residues 1583 to 1593 (SASASLMSLKS) show a composition bias toward low complexity. Polar residues-rich tracts occupy residues 1628–1652 (GRSSSVERAQQPPTHGGFSTVTGTG), 1779–1791 (VSLSRLQSNSSAK), and 1843–1852 (VNPSGQTYSQ). A compositionally biased stretch (basic and acidic residues) spans 1881–1922 (DKQHQRGHGPEGDEGSHELEGHDAHTGDSHGGHHRDQAEPRA). Positions 1933–1942 (RLPQKTQNRL) are enriched in polar residues. The chain crosses the membrane as a helical span at residues 2259–2279 (STVILWSFFKSLCIGLPTFLF). The Extracellular portion of the chain corresponds to 2280–2289 (QPQAFWSAVE). Residues 2290 to 2310 (VYDPLLLMIVDFFWTTLPGII) form a helical membrane-spanning segment. Over 2311 to 2343 (HGYSDQDLPTHLLPSVPVLYTPGRRRLYFNGFR) the chain is Cytoplasmic. The chain crosses the membrane as a helical span at residues 2344 to 2364 (FILWTVEGIIYSFLIFYLLQA). At 2365–2376 (TWMDGNTFHDGQ) the chain is on the extracellular side. Residues 2377–2397 (VLGFHSYGILLLFGSLLQSNV) form a helical membrane-spanning segment. The Cytoplasmic portion of the chain corresponds to 2398–2408 (RIILETSLWTP). The helical transmembrane segment at 2409-2429 (TFLFTTIVLCTIMFFPTVLLY) threads the bilayer. Residues 2430–2444 (SVTGWPRRYMELAGR) are Extracellular-facing. Residues 2445–2465 (VVFAWPMLYFLIPLWVSIGIL) traverse the membrane as a helical segment. At 2466-2724 (VQLLLQVFTS…LKRLVPWYRV (259 aa)) the chain is on the cytoplasmic side. Residues 2725 to 2745 (IFMLIALYQLLSFLTEYFIDI) traverse the membrane as a helical segment. Residues 2746 to 2762 (HWNPGETEMEPWMCVPT) lie on the Extracellular side of the membrane. Residues 2763 to 2783 (LVVEIGFAAVVVCTFYDFIFL) traverse the membrane as a helical segment. Residues 2784-2785 (DH) lie on the Cytoplasmic side of the membrane. Residues 2786–2806 (FSLILNSIVFLMVSSSIVFYT) traverse the membrane as a helical segment. The Extracellular segment spans residues 2807–2823 (ASHVDGTLTSVLFPVFT). A helical transmembrane segment spans residues 2824–2844 (FVILRISFLQAVVWNILFLIV). At 2845-2858 (TVARFMLDKKYLPP) the chain is on the cytoplasmic side. The helical transmembrane segment at 2859-2879 (LNFVHYIPLFIGIDVFVAFVG) threads the bilayer. Residues 2880 to 2903 (YRLEYNQRKSFLLDYSVDASRRKQ) are Extracellular-facing. The chain crosses the membrane as a helical span at residues 2904–2924 (REILNTMLPSFVVDQMINSEL). Residues 2925–3693 (NEEGIPTSLK…RTHFYNNKSN (769 aa)) lie on the Cytoplasmic side of the membrane. A Guanylate cyclase 1 domain is found at 2942–3150 (SVIFCDVYEF…DTVNTASRMK (209 aa)). Disordered stretches follow at residues 3214 to 3245 (DVISETGGQNGESRRSTASLPRQLETAGASSG), 3359 to 3402 (GQTE…SRFD), 3456 to 3475 (SGDEQAAGESSEADHDEVPL), 3485 to 3508 (QAREANEQESAKRSGGDAPPHTPT), 3523 to 3596 (GCAA…ETEK), and 3620 to 3653 (FRRRKPAAPSEAASPSSADTPMDSRVSPTSVDDE). Positions 3383–3402 (RADRRPAGRREDSRGDSRFD) are enriched in basic and acidic residues. Composition is skewed to basic and acidic residues over residues 3485 to 3499 (QAREANEQESAKRSG), 3529 to 3541 (EEEKTAKEGRESE), and 3549 to 3569 (TESRDANGQRVSERDASDARE). A compositionally biased stretch (low complexity) spans 3626-3637 (AAPSEAASPSSA). The chain crosses the membrane as a helical span at residues 3694 to 3714 (INTIEQALIIFLVTFCVQTLT). The Extracellular segment spans residues 3715–3736 (RLALPRFYVVCSHHTINLHVCT). Residues 3737 to 3757 (GLYWAVRATYTLAAFVLWMLF) form a helical membrane-spanning segment. At 3758–3772 (HYRNRKEVATCLELR) the chain is on the cytoplasmic side. Residues 3773–3793 (WMVFLLNLLFISASCVFALSN) form a helical membrane-spanning segment. The Extracellular segment spans residues 3794–3895 (SWGVCGQQQE…GSDLVTANGR (102 aa)). Residues 3896 to 3916 (AYTYWLLSDTIELFFYIVILH) form a helical membrane-spanning segment. Topologically, residues 3917 to 3921 (HNTGL) are cytoplasmic. A helical transmembrane segment spans residues 3922–3942 (LFQNCILVDVLLMTMSLTFII). The Extracellular portion of the chain corresponds to 3943 to 3950 (TTARETAS). The helical transmembrane segment at 3951–3971 (TVSTIATFPCYVFFNLVSAYC) threads the bilayer. At 3972-4367 (KEYIDRLTFY…GSTPGSALGS (396 aa)) the chain is on the cytoplasmic side. A Guanylate cyclase 2 domain is found at 4024–4159 (TFLFADICGF…MDVLTGNMME (136 aa)). Mg(2+)-binding residues include D4029, I4030, and D4073. A disordered region spans residues 4292-4367 (ASHGDSGPSD…GSTPGSALGS (76 aa)). Basic and acidic residues predominate over residues 4333-4344 (DGLKQLRKEIER). Over residues 4356 to 4367 (DIGSTPGSALGS) the composition is skewed to polar residues.

The protein in the N-terminal section; belongs to the cation transport ATPase (P-type) (TC 3.A.3) family. Type IV subfamily. This sequence in the C-terminal section; belongs to the adenylyl cyclase class-4/guanylyl cyclase family. Interacts with chaperone CDC50.1; the interaction regulates guanylate cyclase GC trafficking and sensing environmental changes. Interacts with UGO; the interaction regulates guanylate cyclase GC trafficking and catalytic activity. The cofactor is Mg(2+). It depends on Mn(2+) as a cofactor.

Its subcellular location is the cell membrane. It catalyses the reaction GTP = 3',5'-cyclic GMP + diphosphate. In terms of biological role, catalyzes the synthesis of the second messenger cGMP from GTP. During the tachyzoite lytic growth cycle in host cells, detects and transduces environmental changes in potassium, phosphatidic acid and pH levels. By producing cGMP in response to these environmental changes, activates PKG and thereby regulates PKG-dependent microneme secretion which is essential for tachyzoite motility, host cell attachment invasion of and egress from host cells. May play a role in the fission of connected tachyzoites at their basal pole during egress. Does not display flippase activity towards phosphatidylserine, phosphatidic acid or phosphatidylcholine. This chain is Guanylate cyclase, found in Toxoplasma gondii (strain ATCC 50853 / GT1).